We begin with the raw amino-acid sequence, 68 residues long: Small ribosomal subunit protein eS17 (68 aa).

The protein belongs to the eukaryotic ribosomal protein eS17 family.

The protein is Small ribosomal subunit protein eS17 of Staphylothermus marinus (strain ATCC 43588 / DSM 3639 / JCM 9404 / F1).